Reading from the N-terminus, the 1053-residue chain is MLAVSLRDHGFPSATVQIRPAFCVQSDVVGSGNPPRMNYCQNARTAMSAALQSSDDAFRTVSSPLATDLDLSSPLEFFLRHRLTVVEELWEVVLRQECGQELVDILTQLRDLTSPEGQAPEVGGEALVQVIETLELSDAIRAARAFALYFQLINIVEQHYEQTQYQLAYERSRLEPLPGPDESPEGLHTIEIPQHQLDPFAAVIPLNQDPATFQTLFPRLRQLNVPPQMIQELTDRLDIRLVFTAHPTEIVRHTIRDKQRRIAYLLRQLDELETGKNRGFRELEAQNIRQQLTEEIRLWWRTDELHQFKPTVLDEVDYALHYFQEVLFEAIPLLYQRFRLALQGTFPDLQPPRYNFCQFGSWVGSDRDGNPSVTSAVTWQTACYQRSLVLDRYITAVEHLRNVLSLSMHWSEVLPELLSSLEQESMLFPETYEQLAVRYRQEPYRLKLSYILERLHNTRDRNTRLQQQQEKDPTTPLPEYRDGTLYQAGTAFLEDLKLIQHNLKQTGLSCYELEKLICQVEIFGFNLVHLDIRQESSRHSDAINEICEYLQILPQPYNELSEAERTAWLVQELKTRRPLVPARMPFSESTREIIETLRMVKQLQEEFGEAACQTYIISMSRELSDLLEVLLLAKEVGLYDPVTGKSSLQVIPLFETVEDLQNAPRVMTALFELPFYTQLNPTQSEPLQEVMLGYSDSNKDSGFLSSNWEIHKAQKALGTVARDHRVKLRIFHGRGGSVGRGGGPAYEAILAQPGRTTDGRIKITEQGEVLASKYALPELALYNLETITTAVIQSSLLGSGFDDIEPWNQIMEELAARSRRHYRALVYEQPDLVDFFNQVTPIEEISKLQISSRPARRKTGKRDLGSLRAIPWVFSWTQSRFLLPSWYGVGTALQEFLQERPEQNLNLLRYFYEKWPFFRMVISKVEMTLAKVDLQIAHHYVHELANPEDQERFERVFSQIAAEFQLTCHLVLTITNHGRLLDGDPELQRSVQLRNGTIVPLGFLQVALLKRLRQYRQQTETTGLMRSRYSKGELLRGALLTINGIAAGMRNTG.

H246 is an active-site residue. A compositionally biased stretch (basic and acidic residues) spans 461-473 (RNTRLQQQQEKDP). Positions 461 to 480 (RNTRLQQQQEKDPTTPLPEY) are disordered. Residue K699 is part of the active site.

It belongs to the PEPCase type 1 family. Mg(2+) is required as a cofactor.

It carries out the reaction oxaloacetate + phosphate = phosphoenolpyruvate + hydrogencarbonate. In terms of biological role, forms oxaloacetate, a four-carbon dicarboxylic acid source for the tricarboxylic acid cycle. The protein is Phosphoenolpyruvate carboxylase (ppc) of Synechococcus sp. (strain ATCC 27144 / PCC 6301 / SAUG 1402/1) (Anacystis nidulans).